The chain runs to 74 residues: UPF0352 protein HAPS_0210 (74 aa).

It belongs to the UPF0352 family.

This is UPF0352 protein HAPS_0210 from Glaesserella parasuis serovar 5 (strain SH0165) (Haemophilus parasuis).